Here is a 210-residue protein sequence, read N- to C-terminus: Molybdenum cofactor guanylyltransferase (210 aa).

GTP is bound by residues 9 to 11, Lys21, Asp66, and Asp95; that span reads LAG. Asp95 contacts Mg(2+).

This sequence belongs to the MobA family. As to quaternary structure, monomer. Mg(2+) is required as a cofactor.

It localises to the cytoplasm. It carries out the reaction Mo-molybdopterin + GTP + H(+) = Mo-molybdopterin guanine dinucleotide + diphosphate. Transfers a GMP moiety from GTP to Mo-molybdopterin (Mo-MPT) cofactor (Moco or molybdenum cofactor) to form Mo-molybdopterin guanine dinucleotide (Mo-MGD) cofactor. In Syntrophotalea carbinolica (strain DSM 2380 / NBRC 103641 / GraBd1) (Pelobacter carbinolicus), this protein is Molybdenum cofactor guanylyltransferase.